The sequence spans 463 residues: ATP synthase subunit beta 1 (463 aa).

152–159 (GGAGVGKT) contributes to the ATP binding site.

This sequence belongs to the ATPase alpha/beta chains family. In terms of assembly, F-type ATPases have 2 components, CF(1) - the catalytic core - and CF(0) - the membrane proton channel. CF(1) has five subunits: alpha(3), beta(3), gamma(1), delta(1), epsilon(1). CF(0) has three main subunits: a(1), b(2) and c(9-12). The alpha and beta chains form an alternating ring which encloses part of the gamma chain. CF(1) is attached to CF(0) by a central stalk formed by the gamma and epsilon chains, while a peripheral stalk is formed by the delta and b chains.

It is found in the cell inner membrane. The catalysed reaction is ATP + H2O + 4 H(+)(in) = ADP + phosphate + 5 H(+)(out). Produces ATP from ADP in the presence of a proton gradient across the membrane. The catalytic sites are hosted primarily by the beta subunits. The sequence is that of ATP synthase subunit beta 1 from Shewanella frigidimarina (strain NCIMB 400).